The primary structure comprises 158 residues: MFDVLVYLYETYYRPDACPDSEALVKKLSAVGFEEEEITKALGWLTALAETTNELSDSYPHQTAFSFGTRIYVSQETDVLGTPAVGFIQFLEAAKLINPIQREIVIERALAAGETPISLEKLKVIVLMVLWSQGKEPDGLIFDELFLDDDDAAPRILH.

The protein belongs to the Smg family.

The polypeptide is Protein Smg homolog (Herminiimonas arsenicoxydans).